A 289-amino-acid chain; its full sequence is Formamidopyrimidine-DNA glycosylase 1 (289 aa).

P2 (schiff-base intermediate with DNA) is an active-site residue. E3 functions as the Proton donor in the catalytic mechanism. K61 serves as the catalytic Proton donor; for beta-elimination activity. Residues H100, R119, and K165 each contribute to the DNA site. The FPG-type zinc finger occupies 251–285 (DAYGREGENCRRCGAVIRRERFMNRSSFYCPRCQP). The active-site Proton donor; for delta-elimination activity is R275.

The protein belongs to the FPG family. As to quaternary structure, monomer. Zn(2+) serves as cofactor.

The catalysed reaction is Hydrolysis of DNA containing ring-opened 7-methylguanine residues, releasing 2,6-diamino-4-hydroxy-5-(N-methyl)formamidopyrimidine.. It catalyses the reaction 2'-deoxyribonucleotide-(2'-deoxyribose 5'-phosphate)-2'-deoxyribonucleotide-DNA = a 3'-end 2'-deoxyribonucleotide-(2,3-dehydro-2,3-deoxyribose 5'-phosphate)-DNA + a 5'-end 5'-phospho-2'-deoxyribonucleoside-DNA + H(+). Its function is as follows. Involved in base excision repair of DNA damaged by oxidation or by mutagenic agents. Acts as a DNA glycosylase that recognizes and removes damaged bases. Has a preference for oxidized purines, such as 7,8-dihydro-8-oxoguanine (8-oxoG) when paired with C, G or T, as well as methyl-faPy (formanidopyrimidine residues) in poly(dG-dC) and spiroiminodihydantoin:C base pairs. Unlike its E.coli ortholog has no activity on 8-oxoG:A. Has AP (apurinic/apyrimidinic) lyase activity and introduces nicks in the DNA strand. Cleaves the DNA backbone by beta-delta elimination to generate a single-strand break at the site of the removed base with both 3'- and 5'-phosphates. Cleaves ssDNA containing an AP site. Complements the H(2)O(2) sensitivity of an M.smegmatis fpg disruption mutant; upon expression in M.smegmatis excises 8-oxoG from dsDNA. The sequence is that of Formamidopyrimidine-DNA glycosylase 1 (fpg1) from Mycobacterium tuberculosis (strain ATCC 25618 / H37Rv).